A 327-amino-acid polypeptide reads, in one-letter code: Phenylalanine--tRNA ligase alpha subunit (327 aa).

Residue glutamate 252 participates in Mg(2+) binding.

It belongs to the class-II aminoacyl-tRNA synthetase family. Phe-tRNA synthetase alpha subunit type 1 subfamily. As to quaternary structure, tetramer of two alpha and two beta subunits. Requires Mg(2+) as cofactor.

Its subcellular location is the cytoplasm. The enzyme catalyses tRNA(Phe) + L-phenylalanine + ATP = L-phenylalanyl-tRNA(Phe) + AMP + diphosphate + H(+). This is Phenylalanine--tRNA ligase alpha subunit from Yersinia pestis bv. Antiqua (strain Angola).